Consider the following 209-residue polypeptide: UPF0174 protein HP_1587 (209 aa).

Belongs to the UPF0174 family.

The protein is UPF0174 protein HP_1587 of Helicobacter pylori (strain ATCC 700392 / 26695) (Campylobacter pylori).